The following is a 684-amino-acid chain: Glycine--tRNA ligase beta subunit (684 aa).

The protein belongs to the class-II aminoacyl-tRNA synthetase family. Tetramer of two alpha and two beta subunits.

The protein resides in the cytoplasm. It carries out the reaction tRNA(Gly) + glycine + ATP = glycyl-tRNA(Gly) + AMP + diphosphate. The sequence is that of Glycine--tRNA ligase beta subunit from Pseudomonas syringae pv. syringae (strain B728a).